We begin with the raw amino-acid sequence, 388 residues long: Succinate--CoA ligase [ADP-forming] subunit beta (388 aa).

Residues 9 to 244 (KQLFAEYGLP…PSQDDPREAH (236 aa)) enclose the ATP-grasp domain. ATP is bound by residues K46, 53–55 (GRG), E99, T102, and E107. Mg(2+)-binding residues include N199 and D213. Substrate is bound by residues N264 and 321 to 323 (GIV).

It belongs to the succinate/malate CoA ligase beta subunit family. Heterotetramer of two alpha and two beta subunits. The cofactor is Mg(2+).

The catalysed reaction is succinate + ATP + CoA = succinyl-CoA + ADP + phosphate. The enzyme catalyses GTP + succinate + CoA = succinyl-CoA + GDP + phosphate. It participates in carbohydrate metabolism; tricarboxylic acid cycle; succinate from succinyl-CoA (ligase route): step 1/1. In terms of biological role, succinyl-CoA synthetase functions in the citric acid cycle (TCA), coupling the hydrolysis of succinyl-CoA to the synthesis of either ATP or GTP and thus represents the only step of substrate-level phosphorylation in the TCA. The beta subunit provides nucleotide specificity of the enzyme and binds the substrate succinate, while the binding sites for coenzyme A and phosphate are found in the alpha subunit. The polypeptide is Succinate--CoA ligase [ADP-forming] subunit beta (Pseudomonas fluorescens (strain SBW25)).